A 606-amino-acid polypeptide reads, in one-letter code: MDDQNKNLILATALSFIVILVWFVLFPPPEPEMPLTGETSTELTPDAATGSLPSVTSDTAPSVVIEGETRSAALEQAPRVEIATDRVKGSISLLGGRIDDLSLKDYRETQEEDADIVTMLSPVGSPGAYYALYGWAAGAGVDPSQVPGPDTEWQVIDGDILSVDAPVTLQWDNGAGLSFTRIIEIDDNYMFQITQSVANTSDAPVTVAPYGILARHGEPDDLKNFFILHEGVVAMADGELTETNWDDIPEFPVDQREGVPAERIENVLNGWIGFTDHFWMSVLIPDPSASARLTTKYRPRADIYQAETVLPAQTVAPGTSVSATTQLFAGAKEWETIRNYQTDGVDRFIDSIDWGWFFFLTKPIFFLLHYLNAFIGNMGWAIIGLTLIIKAILLPLAYKSYVSMAKMKELQPQMEKLKEEAGDDRQKMQQGMMELYKKEKVNPAAGCLPILLQIPIFFSLYKVIFVTIELRHAPFFGPFQDLSAPDPTSIMNLYGLLPFDGPEPGSIMALIFIGILPLLLGISMWLQQKLNPAPTDPTQQMIFAWMPWVFMFMLGGFASGLVVYWIANNTITFVQQYMIMRSQGYKPDVFGNIKGGFQKKTKPDSK.

The helical transmembrane segment at 8–28 (LILATALSFIVILVWFVLFPP) threads the bilayer. Residues 33-59 (MPLTGETSTELTPDAATGSLPSVTSDT) are disordered. The next 6 helical transmembrane spans lie at 116–136 (IVTM…YGWA), 348–368 (FIDS…FFLL), 374–394 (FIGN…AILL), 448–468 (LPIL…FVTI), 506–526 (SIMA…SMWL), and 542–562 (IFAW…SGLV).

The protein belongs to the OXA1/ALB3/YidC family. Type 1 subfamily. In terms of assembly, interacts with the Sec translocase complex via SecD. Specifically interacts with transmembrane segments of nascent integral membrane proteins during membrane integration.

It is found in the cell inner membrane. In terms of biological role, required for the insertion and/or proper folding and/or complex formation of integral membrane proteins into the membrane. Involved in integration of membrane proteins that insert both dependently and independently of the Sec translocase complex, as well as at least some lipoproteins. Aids folding of multispanning membrane proteins. The sequence is that of Membrane protein insertase YidC from Roseobacter denitrificans (strain ATCC 33942 / OCh 114) (Erythrobacter sp. (strain OCh 114)).